Here is a 421-residue protein sequence, read N- to C-terminus: UDP-N-acetylglucosamine 1-carboxyvinyltransferase 1 (421 aa).

22-23 (KN) contributes to the phosphoenolpyruvate binding site. Residue Arg95 coordinates UDP-N-acetyl-alpha-D-glucosamine. Cys119 acts as the Proton donor in catalysis. A 2-(S-cysteinyl)pyruvic acid O-phosphothioketal modification is found at Cys119. UDP-N-acetyl-alpha-D-glucosamine-binding positions include 124–128 (RPIEQ), Asp308, and Val330.

This sequence belongs to the EPSP synthase family. MurA subfamily.

Its subcellular location is the cytoplasm. It carries out the reaction phosphoenolpyruvate + UDP-N-acetyl-alpha-D-glucosamine = UDP-N-acetyl-3-O-(1-carboxyvinyl)-alpha-D-glucosamine + phosphate. It functions in the pathway cell wall biogenesis; peptidoglycan biosynthesis. Functionally, cell wall formation. Adds enolpyruvyl to UDP-N-acetylglucosamine. In Staphylococcus epidermidis (strain ATCC 35984 / DSM 28319 / BCRC 17069 / CCUG 31568 / BM 3577 / RP62A), this protein is UDP-N-acetylglucosamine 1-carboxyvinyltransferase 1.